The primary structure comprises 511 residues: Lariat debranching enzyme (511 aa).

4 residues coordinate a divalent metal cation: Cys-52, His-54, Asp-83, and Asn-128. A lariat recognition loop region spans residues 168-198; the sequence is SGIYSHGDVEFSHYERPAFAERDVKSAYHVR. The a divalent metal cation site is built by His-226, His-278, and His-280. A disordered region spans residues 473-511; sequence EDDFIIDRGHGSEEPEAKKSRLEEEKKKKKKKIENLKTL. The span at 477–498 shows a compositional bias: basic and acidic residues; the sequence is IIDRGHGSEEPEAKKSRLEEEK.

The protein belongs to the lariat debranching enzyme family. Fe(2+) serves as cofactor. Zn(2+) is required as a cofactor. Requires Mn(2+) as cofactor.

It is found in the nucleus. Active in presence of diverse metals including Fe(2+), Zn(2+), Mn(2+). Binds two metal cations in two adjacent alpha and beta metal-binding pockets. Its function is as follows. Cleaves the 2'-5' phosphodiester linkage at the branch point of lariat intron pre-mRNAs after splicing and converts them into linear molecules that are subsequently degraded. It thereby facilitates ribonucleotide turnover. This is Lariat debranching enzyme (dbr-1) from Caenorhabditis briggsae.